Reading from the N-terminus, the 55-residue chain is Large ribosomal subunit protein bL33B (55 aa).

Belongs to the bacterial ribosomal protein bL33 family.

The polypeptide is Large ribosomal subunit protein bL33B (Kineococcus radiotolerans (strain ATCC BAA-149 / DSM 14245 / SRS30216)).